The primary structure comprises 304 residues: Recombination-associated protein RdgC (304 aa).

It belongs to the RdgC family.

It is found in the cytoplasm. It localises to the nucleoid. May be involved in recombination. The protein is Recombination-associated protein RdgC of Shewanella baltica (strain OS185).